Consider the following 393-residue polypeptide: METFLFTSESVNEGHPDKLCDQISDAVLDACLEQDPDSKVACETCTKTNMVMVFGEITTKGNIDYEKIVRDTCRNIGFVSDDVGLDADNCKVLVNIEQQSPDIAQGVHGHLTKRPEEIGAGDQGHMFGYATDETPELMPLSHVLATKLGARLTEVRKDGTCPWLRPDGKTQVTIEYYNENGAMVPIRVHTVLISTQHDETVTNDKIAADLKEHVIRPVIPEKYLDEKTIFHLNPSGRFVIGGPHGDAGLTGRKIIIDTYGGWGAHGGGAFSGKDPTKVDRSGAYIVRQAAKSIVASGLARRCIVQVSYAIGVPEPLSVFVDTYGTGKIPDKEILKIVKESFDFRPGMIAIHLDLKRGGNGRFLKTAAYGHFGRDDADFTWEVVKPLKWEKPQD.

A K(+)-binding site is contributed by Glu43. L-methionine is bound by residues Glu56 and Gln99. ATP is bound by residues 167 to 169 (DGK), 235 to 238 (SGRF), Asp246, 252 to 253 (RK), Ala269, Lys273, and Lys277. Asp246 contributes to the L-methionine binding site. Lys277 provides a ligand contact to L-methionine.

It belongs to the AdoMet synthase family. As to quaternary structure, homotetramer. Mn(2+) serves as cofactor. It depends on Mg(2+) as a cofactor. Requires Co(2+) as cofactor. K(+) is required as a cofactor.

It is found in the cytoplasm. It carries out the reaction L-methionine + ATP + H2O = S-adenosyl-L-methionine + phosphate + diphosphate. It participates in amino-acid biosynthesis; S-adenosyl-L-methionine biosynthesis; S-adenosyl-L-methionine from L-methionine: step 1/1. In terms of biological role, catalyzes the formation of S-adenosylmethionine from methionine and ATP. The reaction comprises two steps that are both catalyzed by the same enzyme: formation of S-adenosylmethionine (AdoMet) and triphosphate, and subsequent hydrolysis of the triphosphate. The polypeptide is S-adenosylmethionine synthase 3 (SAM3) (Actinidia chinensis var. chinensis (Chinese soft-hair kiwi)).